The primary structure comprises 529 residues: Probable alpha-galactosidase A (529 aa).

A signal peptide spans 1-19; the sequence is MKALFAAITMAHALLQTQA. Cys-42 and Cys-74 are joined by a disulfide. Asn-45, Asn-83, Asn-89, and Asn-119 each carry an N-linked (GlcNAc...) asparagine glycan. A disulfide bond links Cys-122 and Cys-152. Asp-150 functions as the Nucleophile in the catalytic mechanism. N-linked (GlcNAc...) asparagine glycosylation occurs at Asn-199. Asp-208 acts as the Proton donor in catalysis. An N-linked (GlcNAc...) asparagine glycan is attached at Asn-351. A Ricin B-type lectin domain is found at 408–528; it reads RVDAVSTGIV…GLPSGVRVSG (121 aa). Cystine bridges form between Cys-425-Cys-438 and Cys-462-Cys-475.

Belongs to the glycosyl hydrolase 27 family.

Its subcellular location is the secreted. The enzyme catalyses Hydrolysis of terminal, non-reducing alpha-D-galactose residues in alpha-D-galactosides, including galactose oligosaccharides, galactomannans and galactolipids.. Functionally, hydrolyzes a variety of simple alpha-D-galactoside as well as more complex molecules such as oligosaccharides and polysaccharides. The chain is Probable alpha-galactosidase A (aglA) from Aspergillus terreus (strain NIH 2624 / FGSC A1156).